Here is a 359-residue protein sequence, read N- to C-terminus: Peptide chain release factor 1 (359 aa).

Q236 is modified (N5-methylglutamine).

This sequence belongs to the prokaryotic/mitochondrial release factor family. Post-translationally, methylated by PrmC. Methylation increases the termination efficiency of RF1.

The protein localises to the cytoplasm. Peptide chain release factor 1 directs the termination of translation in response to the peptide chain termination codons UAG and UAA. This is Peptide chain release factor 1 from Lacticaseibacillus casei (strain BL23) (Lactobacillus casei).